We begin with the raw amino-acid sequence, 211 residues long: Superoxide dismutase [Fe] (211 aa).

Fe cation-binding residues include His-34, His-85, Asp-171, and His-175.

The protein belongs to the iron/manganese superoxide dismutase family. In terms of assembly, homotetramer. Fe cation is required as a cofactor.

The protein localises to the cytoplasm. It carries out the reaction 2 superoxide + 2 H(+) = H2O2 + O2. Functionally, destroys superoxide anion radicals which are normally produced within the cells and which are toxic to biological systems. This chain is Superoxide dismutase [Fe] (sod), found in Saccharolobus solfataricus (strain ATCC 35092 / DSM 1617 / JCM 11322 / P2) (Sulfolobus solfataricus).